The primary structure comprises 75 residues: UPF0235 protein MSMEG_3845 (75 aa).

The protein belongs to the UPF0235 family.

This chain is UPF0235 protein MSMEG_3845, found in Mycolicibacterium smegmatis (strain ATCC 700084 / mc(2)155) (Mycobacterium smegmatis).